The primary structure comprises 206 residues: Small ribosomal subunit protein uS4 (206 aa).

Residues 96-156 (CRLDNVVYRM…EKAKNQLRIA (61 aa)) enclose the S4 RNA-binding domain.

It belongs to the universal ribosomal protein uS4 family. As to quaternary structure, part of the 30S ribosomal subunit. Contacts protein S5. The interaction surface between S4 and S5 is involved in control of translational fidelity.

Functionally, one of the primary rRNA binding proteins, it binds directly to 16S rRNA where it nucleates assembly of the body of the 30S subunit. In terms of biological role, with S5 and S12 plays an important role in translational accuracy. This is Small ribosomal subunit protein uS4 from Azotobacter vinelandii (strain DJ / ATCC BAA-1303).